The primary structure comprises 153 residues: Arachidonate 5-lipoxygenase-activating protein (153 aa).

Topologically, residues 1–8 (MDQETVGN) are lumenal. The chain crosses the membrane as a helical span at residues 9 to 30 (IVLLAIVTLISVVQNGFFAHKV). The Cytoplasmic portion of the chain corresponds to 31–52 (EHESKTHNGRSFQRTGPLAFER). The helical transmembrane segment at 53 to 77 (VYTANQNCVDAYPTFLVMLWSAGLL) threads the bilayer. The Lumenal portion of the chain corresponds to 78–80 (CSQ). Residues 81–102 (VPAAFAGLMYLFVRQKYFVGYL) traverse the membrane as a helical segment. At 103 to 107 (GERTQ) the chain is on the cytoplasmic side. The stretch at 108 to 115 (STPGYIFG) is an intramembrane region. Residues 116-128 (KRIILFLFAMSLA) traverse the membrane as a helical segment. Residues 129 to 153 (GILNYFLIAFFGSDFENYIKTVTTT) lie on the Lumenal side of the membrane.

This sequence belongs to the MAPEG family. As to quaternary structure, homotrimer. Interacts with LTC4S and ALOX5.

It localises to the nucleus membrane. It is found in the endoplasmic reticulum membrane. Its function is as follows. Required for leukotriene biosynthesis by ALOX5 (5-lipoxygenase). Anchors ALOX5 to the membrane. Binds arachidonic acid, and could play an essential role in the transfer of arachidonic acid to ALOX5. Binds to MK-886, a compound that blocks the biosynthesis of leukotrienes. This chain is Arachidonate 5-lipoxygenase-activating protein (ALOX5AP), found in Ovis aries (Sheep).